Consider the following 121-residue polypeptide: Parathyroid hormone 4 (121 aa).

A signal peptide spans 1–24; sequence MLKMQRSQQRVALMMLMVVAAVHC. Positions 25 to 29 are excised as a propeptide; the sequence is QESES. A disordered region spans residues 77-97; it reads RSRGAQLYSQPGREESSGGQK.

Belongs to the parathyroid hormone family. As to expression, specifically expressed in a bilateral cluster of neurons in the dorsal region of the periventricular hypothalamus. Their axons project through the midbrain and hindbrain and down the spinal cord.

The protein localises to the secreted. Neuroendocrine peptide which is produced by a subset of neurons in the hypothalamus. Activates the G-protein coupled receptors pth1ra, pth1rb and pth2r with similar affinity. Receptor binding stimulates intracellular cAMP production. Plays a role in bone mineralization by regulating expression of factors involved in phosphate homeostasis. Important for embryonic bone development. In Danio rerio (Zebrafish), this protein is Parathyroid hormone 4.